The chain runs to 638 residues: Chaperone protein DnaK (638 aa).

Threonine 198 carries the phosphothreonine; by autocatalysis modification. Residues 598 to 638 are disordered; the sequence is YEASQKEAAEADAKADAAKDSDVVDADFEEIDEDDDKKKSA. Residues 601 to 619 are compositionally biased toward basic and acidic residues; sequence SQKEAAEADAKADAAKDSD. A compositionally biased stretch (acidic residues) spans 620–632; it reads VVDADFEEIDEDD.

The protein belongs to the heat shock protein 70 family.

Acts as a chaperone. This Mesorhizobium japonicum (strain LMG 29417 / CECT 9101 / MAFF 303099) (Mesorhizobium loti (strain MAFF 303099)) protein is Chaperone protein DnaK.